The sequence spans 592 residues: Arginine--tRNA ligase (592 aa).

A 'HIGH' region motif is present at residues 112 to 122 (VNPNKELHVGH).

The protein belongs to the class-I aminoacyl-tRNA synthetase family. As to quaternary structure, monomer.

The protein resides in the cytoplasm. It catalyses the reaction tRNA(Arg) + L-arginine + ATP = L-arginyl-tRNA(Arg) + AMP + diphosphate. The polypeptide is Arginine--tRNA ligase (Thermus thermophilus (strain ATCC BAA-163 / DSM 7039 / HB27)).